The sequence spans 50 residues: Insulin (50 aa).

3 disulfides stabilise this stretch: Cys7–Cys36, Cys19–Cys49, and Cys35–Cys40.

The protein belongs to the insulin family. In terms of assembly, heterodimer of a B chain and an A chain linked by two disulfide bonds.

It is found in the secreted. Functionally, insulin decreases blood glucose concentration. It increases cell permeability to monosaccharides, amino acids and fatty acids. It accelerates glycolysis, the pentose phosphate cycle, and glycogen synthesis in liver. This is Insulin (ins) from Oncorhynchus gorbuscha (Pink salmon).